Reading from the N-terminus, the 302-residue chain is uncharacterized protein (302 aa).

3 N-linked (GlcNAc...) asparagine glycosylation sites follow: N32, N39, and N94. The region spanning 80 to 115 is the ShKT domain; the sequence is CRDTDMNCAVWVATNTSDCENVELVNSHCPRTCQTC. 3 disulfide bridges follow: C80–C115, C87–C108, and C98–C112. N-linked (GlcNAc...) asparagine glycosylation is present at N181.

This is an uncharacterized protein from Caenorhabditis elegans.